The following is a 257-amino-acid chain: Glucosamine-6-phosphate deaminase (257 aa).

Residue D64 is the Proton acceptor; for enolization step of the active site. N133 (for ring-opening step) is an active-site residue. Residue H135 is the Proton acceptor; for ring-opening step of the active site. E140 serves as the catalytic For ring-opening step.

This sequence belongs to the glucosamine/galactosamine-6-phosphate isomerase family. NagB subfamily.

The catalysed reaction is alpha-D-glucosamine 6-phosphate + H2O = beta-D-fructose 6-phosphate + NH4(+). Its pathway is amino-sugar metabolism; N-acetylneuraminate degradation; D-fructose 6-phosphate from N-acetylneuraminate: step 5/5. Functionally, catalyzes the reversible isomerization-deamination of glucosamine 6-phosphate (GlcN6P) to form fructose 6-phosphate (Fru6P) and ammonium ion. The sequence is that of Glucosamine-6-phosphate deaminase from Corynebacterium urealyticum (strain ATCC 43042 / DSM 7109).